The primary structure comprises 473 residues: 1-aminocyclopropane-1-carboxylate synthase (473 aa).

Substrate-binding positions include 84-85 (DY), tyrosine 145, and aspartate 151. Lysine 273 bears the N6-(pyridoxal phosphate)lysine mark.

The protein belongs to the class-I pyridoxal-phosphate-dependent aminotransferase family. In terms of assembly, homodimer. It depends on pyridoxal 5'-phosphate as a cofactor.

The enzyme catalyses S-adenosyl-L-methionine = 1-aminocyclopropane-1-carboxylate + S-methyl-5'-thioadenosine + H(+). It carries out the reaction (2S)-2-amino-3-butenoate + H2O = 2-oxobutanoate + NH4(+). The protein operates within alkene biosynthesis; ethylene biosynthesis via S-adenosyl-L-methionine; ethylene from S-adenosyl-L-methionine: step 1/2. Inhibited by L-aminoethoxyvinylglycine (AVG). Inhibited by L-vinylglycine (L-VG). Inhibited by S-methylmethionine through a L-VG ketimine intermediate. In terms of biological role, catalyzes the formation of 1-aminocyclopropane-1-carboxylate, a direct precursor of ethylene in higher plants. Also catalyzes the conversion of L-vinylglycine (L-VG) to alpha-ketobutyrate and ammonia. Can use S-methylmethionine as substrate. This chain is 1-aminocyclopropane-1-carboxylate synthase, found in Malus domestica (Apple).